The sequence spans 228 residues: MPHAALSSLVLLSLATAIVADCPSSTWVQFQGSCYAFLQVTINVENIEDVRKQCTDHGADMVSIHNEEENAFILDTLQKRWKGPDDLLLGMFYDTDDATFKWYDHSNMTFDKWADQDGEDLVDTCGFLYTKTGEWRKGDCEISSVEGTLCKAAIPYDKKYLSDNHILISTLVIASTVTLAVLGAIIWFLYRRNARSGFTSFSPAPLSPYSDGCALVVAEEDEYAVQLD.

An N-terminal signal peptide occupies residues 1–20; the sequence is MPHAALSSLVLLSLATAIVA. The Extracellular portion of the chain corresponds to 21 to 165; sequence DCPSSTWVQF…YDKKYLSDNH (145 aa). In terms of domain architecture, C-type lectin spans 30–149; that stretch reads FQGSCYAFLQ…CEISSVEGTL (120 aa). Asn-107 is a glycosylation site (N-linked (GlcNAc...) asparagine). A disulfide bridge links Cys-125 with Cys-140. Residues 166 to 186 form a helical membrane-spanning segment; that stretch reads ILISTLVIASTVTLAVLGAII. Residues 187–228 are Cytoplasmic-facing; sequence WFLYRRNARSGFTSFSPAPLSPYSDGCALVVAEEDEYAVQLD.

The protein localises to the membrane. It localises to the cell projection. It is found in the filopodium. Its subcellular location is the cytoplasm. The protein resides in the cell cortex. The protein localises to the microvillus. Potential multifunctional C-type lectin receptor that may play roles in endocytosis and phagocytosis as well as in cell adhesion and migration. The protein is CD302 antigen (Cd302) of Mus musculus (Mouse).